Here is a 996-residue protein sequence, read N- to C-terminus: KK-1 biosynthesis cluster protein D (996 aa).

Disordered regions lie at residues 307–333 (HDTDGEKASTAPIRSNKLSQSKQPELD), 425–449 (EQDNQTNEEGTGEVQSQRDRRARDL), 489–556 (AGVA…ALRA), and 571–602 (STHSIHQRASVNTTAPTVARSSDSDDSDSLHS). Polar residues-rich tracts occupy residues 318–329 (PIRSNKLSQSKQ) and 428–439 (NQTNEEGTGEVQ). 2 stretches are compositionally biased toward basic and acidic residues: residues 440–449 (SQRDRRARDL) and 500–527 (RAAEEGGCREKEAENAKTDEEQVQDKAA). Polar residues predominate over residues 572-590 (THSIHQRASVNTTAPTVAR).

Its pathway is secondary metabolite biosynthesis. Functionally, part of the gene cluster that mediates the biosynthesis of KK-1, a novel cyclic depsipeptide with 10 residues which is a promising active compound with high activity against many plant pathogens, especially Botrytis cinerea. The role of kk1D in KK-1 biosynthesis has still to be determined. The nonribosomal peptide synthetase (NRPS) kk1B catalyzes the elongation and cyclization of the decapeptide chain composed of 1 D-lactic acid residue (D-Lac), 1 pipecolic acid residue (Pip), 1 aspartic acid residue (Asp), 1 isoleucine residue (Ile), 1 glycine residue (Gly), 1 tyrosine residue (Tyr) and 4 valine residues (Val). The Asp, Ile and 3 Val residues are N-methylated by the 5 methyltransferase domains from the NRPS (found in modules 3, 5, 6, 7 and 9), whereas the Tyr residue is O-methylated by the cluster encoded O-methyltransferase kk1A. The thioesterase kk1J is likely to be involved in the corrective mechanism of peptide chain synthesis. The D-lactate dehydrogenase kk1H is involved in the synthesis of D-lactic acid from pyruvic acid, which is recognized by the A domain of the first kk1B module. The pyrroline-5-carboxylate reductase kk1I is involved in the synthesis of the L-pipecolic acid residue of KK-1 from delta-1-pyrroline-5-carboxylate (P5C), a metabolic intermediate of lysine. It is still unclear how kk1C and kk1D are involved in the production of KK-1. The protein is KK-1 biosynthesis cluster protein D of Curvularia clavata.